The primary structure comprises 85 residues: Putative membrane protein insertion efficiency factor (85 aa).

It belongs to the UPF0161 family.

Its subcellular location is the cell inner membrane. Functionally, could be involved in insertion of integral membrane proteins into the membrane. This chain is Putative membrane protein insertion efficiency factor, found in Escherichia coli O157:H7.